We begin with the raw amino-acid sequence, 280 residues long: Maltodextrin transport system permease protein MalD (280 aa).

The next 6 helical transmembrane spans lie at 15–35 (LTYL…LITI), 77–97 (LIIA…AGYA), 110–130 (LVFF…AFFV), 142–162 (WFLI…LMKG), 200–220 (VQAL…SFLL), and 244–264 (IAYF…LFFF). Residues 73-265 (YLNTLIIALI…LPICILFFFL (193 aa)) form the ABC transmembrane type-1 domain.

The protein belongs to the binding-protein-dependent transport system permease family. MalFG subfamily.

The protein resides in the cell membrane. In terms of biological role, part of the binding-protein-dependent transport system for maltodextrin; probably responsible for the translocation of the substrate across the membrane. The sequence is that of Maltodextrin transport system permease protein MalD (malD) from Streptococcus pneumoniae (strain ATCC BAA-255 / R6).